A 604-amino-acid chain; its full sequence is Prostaglandin G/H synthase 2 (604 aa).

The first 17 residues, 1-17 (MLARALLLCVALALGHA), serve as a signal peptide directing secretion. An EGF-like domain is found at 18–55 (ANPCCSNPCQNRGVCMSVGFDQYQCDCTRTGFYGENCS). 4 cysteine pairs are disulfide-bonded: Cys-21/Cys-32, Cys-22/Cys-145, Cys-26/Cys-42, and Cys-44/Cys-54. N-linked (GlcNAc...) asparagine glycosylation is present at Asn-53. Arg-106 serves as a coordination point for substrate. N-linked (GlcNAc...) asparagine glycosylation is present at Asn-130. The Proton acceptor role is filled by His-193. Tyr-341 contributes to the substrate binding site. Tyr-371 (for cyclooxygenase activity) is an active-site residue. His-374 is a binding site for heme b. N-linked (GlcNAc...) asparagine glycosylation occurs at Asn-396. At Cys-526 the chain carries S-nitrosocysteine. Cysteines 555 and 561 form a disulfide. N-linked (GlcNAc...) asparagine glycosylation is present at Asn-580.

This sequence belongs to the prostaglandin G/H synthase family. Homodimer. Heme b serves as cofactor. Post-translationally, S-nitrosylation by NOS2 (iNOS) activates enzyme activity. S-nitrosylation may take place on different Cys residues in addition to Cys-526.

Its subcellular location is the microsome membrane. It is found in the endoplasmic reticulum membrane. It localises to the nucleus inner membrane. The protein resides in the nucleus outer membrane. The catalysed reaction is (5Z,8Z,11Z,14Z)-eicosatetraenoate + AH2 + 2 O2 = prostaglandin H2 + A + H2O. It catalyses the reaction (5Z,8Z,11Z,14Z)-eicosatetraenoate + 2 O2 = prostaglandin G2. The enzyme catalyses prostaglandin G2 + AH2 = prostaglandin H2 + A + H2O. It carries out the reaction (5Z,8Z,11Z,14Z,17Z)-eicosapentaenoate + 2 O2 = prostaglandin G3. The catalysed reaction is prostaglandin G3 + AH2 = prostaglandin H3 + A + H2O. It catalyses the reaction (8Z,11Z,14Z)-eicosatrienoate + 2 O2 = prostaglandin G1. The enzyme catalyses prostaglandin G1 + AH2 = prostaglandin H1 + A + H2O. It carries out the reaction 2-(5Z,8Z,11Z,14Z)-eicosatetraenoyl-sn-glycero-3-phosphoethanolamine + 2 O2 = 2-(prostaglandin G2)-sn-glycero-3-phosphoethanolamine. The catalysed reaction is 2-(prostaglandin G2)-sn-glycero-3-phosphoethanolamine + AH2 = 2-(prostaglandin H2)-sn-glycero-3-phosphoethanolamine + A + H2O. It catalyses the reaction 2-(5Z,8Z,11Z,14Z)-eicosatetraenoyl-sn-glycero-3-phosphocholine + 2 O2 = 2-(prostaglandin G2)-sn-glycero-3-phosphocholine. The enzyme catalyses 2-(prostaglandin G2)-sn-glycero-3-phosphocholine + AH2 = 2-(prostaglandin H2)-sn-glycero-3-phosphocholine + A + H2O. It carries out the reaction (15S)-hydroperoxy-(5Z,8Z,11Z,13E)-eicosatetraenoate + AH2 = (15S)-hydroxy-(5Z,8Z,11Z,13E)-eicosatetraenoate + A + H2O. The catalysed reaction is 2-(5Z,8Z,11Z,14Z)-eicosatetraenoyl-sn-glycero-3-phosphocholine + AH2 + O2 = 2-[(15S)-hydroxy-(5Z,8Z,11Z,13E)-eicosatetraenoyl]-sn-glycero-3-phosphocholine + A + H2O. It catalyses the reaction 2-(5Z,8Z,11Z,14Z)-eicosatetraenoyl-sn-glycero-3-phosphocholine + AH2 + O2 = 2-[(15R)-hydroxy-(5Z,8Z,11Z,13E)-eicosatetraenoyl]-sn-glycero-3-phosphocholine + A + H2O. The enzyme catalyses 2-(5Z,8Z,11Z,14Z)-eicosatetraenoyl-sn-glycero-3-phosphocholine + AH2 + O2 = 2-[(11R)-hydroxy-(5Z,8Z,12E,14Z)-eicosatetraenoyl]-sn-glycero-3-phosphocholine + A + H2O. It carries out the reaction (9Z,12Z)-octadecadienoate + AH2 + O2 = 9-hydroxy-(10E,12Z)-octadecadienoate + A + H2O. The catalysed reaction is (9Z,12Z)-octadecadienoate + AH2 + O2 = 13-hydroxy-(9Z,11E)-octadecadienoate + A + H2O. It catalyses the reaction (5Z,8Z,11Z,14Z)-eicosatetraenoate + AH2 + O2 = (15R)-hydroxy-(5Z,8Z,11Z,13E)-eicosatetraenoate + A + H2O. The enzyme catalyses (5Z,8Z,11Z,14Z)-eicosatetraenoate + AH2 + O2 = (11R)-hydroxy-(5Z,8Z,12E,14Z)-eicosatetraenoate + A + H2O. It carries out the reaction (5Z,8Z,11Z,14Z,17Z)-eicosapentaenoate + AH2 + O2 = (11R)-hydroxy-(5Z,8Z,12E,14Z,17Z)-eicosapentaenoate + A + H2O. The catalysed reaction is (5Z,8Z,11Z,14Z,17Z)-eicosapentaenoate + AH2 + O2 = (18S)-hydroxy-(5Z,8Z,11Z,14Z,16E)-eicosapentaenoate + A + H2O. It catalyses the reaction (5Z,8Z,11Z,14Z,17Z)-eicosapentaenoate + AH2 + O2 = (18R)-hydroxy-(5Z,8Z,11Z,14Z,16E)-eicosapentaenoate + A + H2O. The enzyme catalyses (5Z,8Z,11Z,14Z,17Z)-eicosapentaenoate + AH2 + O2 = (15R)-hydroxy-(5Z,8Z,11Z,13E,17Z)-eicosapentaenoate + A + H2O. It carries out the reaction (5Z,8Z,11Z,14Z,17Z)-eicosapentaenoate + AH2 + O2 = (15S)-hydroxy-(5Z,8Z,11Z,13E,17Z)-eicosapentaenoate + A + H2O. The catalysed reaction is (7Z,10Z,13Z,16Z,19Z)-docosapentaenoate + AH2 + O2 = 13R-hydroxy-(7Z,10Z,14E,16Z,19Z)-docosapentaenoate + A + H2O. It catalyses the reaction (4Z,7Z,10Z,13Z,16Z,19Z)-docosahexaenoate + AH2 + O2 = 13-hydroxy-(4Z,7Z,10Z,14E,16Z,19Z)-docosahexaenoate + A + H2O. The enzyme catalyses (5S)-hydroxy-(6E,8Z,11Z,14Z)-eicosatetraenoate + AH2 + O2 = (5S,15R)-dihydroxy-(6E,8Z,11Z,13E)-eicosatetraenoate + A + H2O. It carries out the reaction (4Z,7Z,10Z,13Z,16Z,19Z)-docosahexaenoate + AH2 + O2 = 17R-hydroxy-(4Z,7Z,10Z,13Z,15E,19Z)-docosahexaenoate + A + H2O. The catalysed reaction is (5S)-hydroxy-(6E,8Z,11Z,14Z)-eicosatetraenoate + AH2 + O2 = (5S,15S)-dihydroxy-(6E,8Z,11Z,13E)-eicosatetraenoate + A + H2O. It catalyses the reaction (5S)-hydroxy-(6E,8Z,11Z,14Z)-eicosatetraenoate + AH2 + O2 = (5S,11R)-dihydroxy-(6E,8Z,12E,14Z)-eicosatetraenoate + A + H2O. The enzyme catalyses 2-(5Z,8Z,11Z,14Z-eicosatetraenoyl)-glycerol + 2 O2 = 2-glyceryl-prostaglandin G2. It carries out the reaction 2-glyceryl-prostaglandin G2 + AH2 = 2-glyceryl-prostaglandin H2 + A + H2O. The catalysed reaction is (5Z,8Z,11Z,14Z)-eicosatetraenoate + O2 = (15R)-hydroperoxy-(5Z,8Z,11Z,13E)-eicosatetraenoate. It catalyses the reaction (5Z,8Z,11Z,14Z)-eicosatetraenoate + O2 = 11R-hydroperoxy-(5Z,8Z,12E,14Z)-eicosatetraenoate. The enzyme catalyses (9Z,12Z)-octadecadienoate + AH2 + O2 = (9R)-hydroxy-(10E,12Z)-octadecadienoate + A + H2O. It carries out the reaction (9Z,12Z)-octadecadienoate + AH2 + O2 = (9S)-hydroxy-(10E,12Z)-octadecadienoate + A + H2O. The catalysed reaction is (9Z,12Z)-octadecadienoate + AH2 + O2 = (13S)-hydroxy-(9Z,11E)-octadecadienoate + A + H2O. It catalyses the reaction (9Z,12Z)-octadecadienoate + AH2 + O2 = (13R)-hydroxy-(9Z,11E)-octadecadienoate + A + H2O. It functions in the pathway lipid metabolism; prostaglandin biosynthesis. Functionally, dual cyclooxygenase and peroxidase in the biosynthesis pathway of prostanoids, a class of C20 oxylipins mainly derived from arachidonate ((5Z,8Z,11Z,14Z)-eicosatetraenoate, AA, C20:4(n-6)), with a particular role in the inflammatory response. The cyclooxygenase activity oxygenates AA to the hydroperoxy endoperoxide prostaglandin G2 (PGG2), and the peroxidase activity reduces PGG2 to the hydroxy endoperoxide prostaglandin H2 (PGH2), the precursor of all 2-series prostaglandins and thromboxanes. This complex transformation is initiated by abstraction of hydrogen at carbon 13 (with S-stereochemistry), followed by insertion of molecular O2 to form the endoperoxide bridge between carbon 9 and 11 that defines prostaglandins. The insertion of a second molecule of O2 (bis-oxygenase activity) yields a hydroperoxy group in PGG2 that is then reduced to PGH2 by two electrons. Similarly catalyzes successive cyclooxygenation and peroxidation of dihomo-gamma-linoleate (DGLA, C20:3(n-6)) and eicosapentaenoate (EPA, C20:5(n-3)) to corresponding PGH1 and PGH3, the precursors of 1- and 3-series prostaglandins. In an alternative pathway of prostanoid biosynthesis, converts 2-arachidonoyl lysophopholipids to prostanoid lysophopholipids, which are then hydrolyzed by intracellular phospholipases to release free prostanoids. Metabolizes 2-arachidonoyl glycerol yielding the glyceryl ester of PGH2, a process that can contribute to pain response. Generates lipid mediators from n-3 and n-6 polyunsaturated fatty acids (PUFAs) via a lipoxygenase-type mechanism. Oxygenates PUFAs to hydroperoxy compounds and then reduces them to corresponding alcohols. Plays a role in the generation of resolution phase interaction products (resolvins) during both sterile and infectious inflammation. Metabolizes docosahexaenoate (DHA, C22:6(n-3)) to 17R-HDHA, a precursor of the D-series resolvins (RvDs). As a component of the biosynthetic pathway of E-series resolvins (RvEs), converts eicosapentaenoate (EPA, C20:5(n-3)) primarily to 18S-HEPE that is further metabolized by ALOX5 and LTA4H to generate 18S-RvE1 and 18S-RvE2. In vascular endothelial cells, converts docosapentaenoate (DPA, C22:5(n-3)) to 13R-HDPA, a precursor for 13-series resolvins (RvTs) shown to activate macrophage phagocytosis during bacterial infection. In activated leukocytes, contributes to oxygenation of hydroxyeicosatetraenoates (HETE) to diHETES (5,15-diHETE and 5,11-diHETE). Can also use linoleate (LA, (9Z,12Z)-octadecadienoate, C18:2(n-6)) as substrate and produce hydroxyoctadecadienoates (HODEs) in a regio- and stereospecific manner, being (9R)-HODE ((9R)-hydroxy-(10E,12Z)-octadecadienoate) and (13S)-HODE ((13S)-hydroxy-(9Z,11E)-octadecadienoate) its major products. During neuroinflammation, plays a role in neuronal secretion of specialized preresolving mediators (SPMs) 15R-lipoxin A4 that regulates phagocytic microglia. This Equus caballus (Horse) protein is Prostaglandin G/H synthase 2 (PTGS2).